The following is a 181-amino-acid chain: Trafficking protein particle complex subunit 3 homolog (181 aa).

Cysteine 70 carries S-palmitoyl cysteine lipidation.

Belongs to the TRAPP small subunits family. BET3 subfamily. Homodimer. Part of the multisubunit TRAPP (transport protein particle) complex.

It localises to the golgi apparatus. The protein localises to the cis-Golgi network. The protein resides in the endoplasmic reticulum. May play a role in vesicular transport from endoplasmic reticulum to Golgi. Required for the systemic spread of the RNAi response. In Caenorhabditis elegans, this protein is Trafficking protein particle complex subunit 3 homolog (trpp-3).